The following is a 244-amino-acid chain: Reticulon-like protein B7 (244 aa).

Positions 70 to 244 (PADVLLWRDK…EAKFLSKIPH (175 aa)) constitute a Reticulon domain. 3 helical membrane-spanning segments follow: residues 80–100 (KVTLGLLSAVTVIWLLFGFGG), 103–123 (LLTSLCRGSILFLLLSFLWSN), and 172–192 (FVMAVIGLWLVSVIGNWFSFL).

It localises to the endoplasmic reticulum membrane. The sequence is that of Reticulon-like protein B7 (RTNLB7) from Arabidopsis thaliana (Mouse-ear cress).